Reading from the N-terminus, the 75-residue chain is MKAEIHPDYHTIKVVMTDGTEYLTRSTWGKEGDTLNLDIDPKSHPAWTGGNAQIMDRGGRVSRFQKKFSGFLKKD.

It belongs to the bacterial ribosomal protein bL31 family. Type A subfamily. In terms of assembly, part of the 50S ribosomal subunit.

Functionally, binds the 23S rRNA. The chain is Large ribosomal subunit protein bL31 from Bradyrhizobium diazoefficiens (strain JCM 10833 / BCRC 13528 / IAM 13628 / NBRC 14792 / USDA 110).